The sequence spans 416 residues: MDKIIVEGGRTLSGEVQVSGAKNAALPILAASLLVDGWNTFYNVPELQDISTIGLLLEHLGAKVEKDGHTIKIDASGLCETEAPYDLVRRMRASVLVLGPLTARLKKARVSLPGGCAIGARPIDQHLRGLEMLGATVELSHGYVEVQAEKLRGADIYLDTPTVTGTENLMMAACLAEGVTILRNVAREPEIVALADLLNRMGGKVEGAGSPVLTITGVEALNPVEFTIIPDRIEAGTFMVAAALTEGDVLVKDAVPAHLQALISKLRLAGATVTEEGNGIRVQGKRPICSVDVKTLPHPGFPTDMQAQFMVLMTTAKGLSVIAETIFENRFIHVSELVRMGANISISQNSAVIRGVKHLSAAPVMATDLRASASLILAGLIAQGSTEIHRVYHIDRGYESIEQKFSQLGAAVRRVK.

Residue 22 to 23 (KN) participates in phosphoenolpyruvate binding. A UDP-N-acetyl-alpha-D-glucosamine-binding site is contributed by arginine 92. Cysteine 116 acts as the Proton donor in catalysis. At cysteine 116 the chain carries 2-(S-cysteinyl)pyruvic acid O-phosphothioketal. UDP-N-acetyl-alpha-D-glucosamine contacts are provided by residues 121–125 (RPIDQ), aspartate 304, and isoleucine 326.

The protein belongs to the EPSP synthase family. MurA subfamily.

The protein resides in the cytoplasm. It catalyses the reaction phosphoenolpyruvate + UDP-N-acetyl-alpha-D-glucosamine = UDP-N-acetyl-3-O-(1-carboxyvinyl)-alpha-D-glucosamine + phosphate. It participates in cell wall biogenesis; peptidoglycan biosynthesis. Its function is as follows. Cell wall formation. Adds enolpyruvyl to UDP-N-acetylglucosamine. The polypeptide is UDP-N-acetylglucosamine 1-carboxyvinyltransferase (Desulfatibacillum aliphaticivorans).